The sequence spans 261 residues: 2-phytyl-1,4-beta-naphthoquinone methyltransferase, chloroplastic (261 aa).

The N-terminal 30 residues, 1–30 (MAALLGIVSPVTFTGKHPVNSRSRRRTVVK), are a transit peptide targeting the chloroplast.

This sequence belongs to the class I-like SAM-binding methyltransferase superfamily. MenG/UbiE family.

Its subcellular location is the plastid. It is found in the chloroplast. The catalysed reaction is demethylphylloquinol + S-adenosyl-L-methionine = phylloquinol + S-adenosyl-L-homocysteine + H(+). Involved in the biosynthesis of phylloquinone (vitamin K1). Methyltransferase required for the conversion of 2-phytyl-1,4-beta-naphthoquinol to phylloquinol. This Arabidopsis thaliana (Mouse-ear cress) protein is 2-phytyl-1,4-beta-naphthoquinone methyltransferase, chloroplastic.